Here is a 570-residue protein sequence, read N- to C-terminus: Sulfite reductase [NADPH] hemoprotein beta-component (570 aa).

Positions 434, 440, 479, and 483 each coordinate [4Fe-4S] cluster. C483 contributes to the siroheme binding site.

This sequence belongs to the nitrite and sulfite reductase 4Fe-4S domain family. As to quaternary structure, alpha(8)-beta(8). The alpha component is a flavoprotein, the beta component is a hemoprotein. The cofactor is siroheme. It depends on [4Fe-4S] cluster as a cofactor.

It catalyses the reaction hydrogen sulfide + 3 NADP(+) + 3 H2O = sulfite + 3 NADPH + 4 H(+). It functions in the pathway sulfur metabolism; hydrogen sulfide biosynthesis; hydrogen sulfide from sulfite (NADPH route): step 1/1. Component of the sulfite reductase complex that catalyzes the 6-electron reduction of sulfite to sulfide. This is one of several activities required for the biosynthesis of L-cysteine from sulfate. This Enterobacter sp. (strain 638) protein is Sulfite reductase [NADPH] hemoprotein beta-component.